An 88-amino-acid chain; its full sequence is Small ribosomal subunit protein bS20 (88 aa).

Residues 1 to 26 (MANTAQARKRARQNTKRRQNSASQRS) are disordered. A compositionally biased stretch (basic residues) spans 7–19 (ARKRARQNTKRRQ).

The protein belongs to the bacterial ribosomal protein bS20 family.

Its function is as follows. Binds directly to 16S ribosomal RNA. The protein is Small ribosomal subunit protein bS20 of Psychrobacter cryohalolentis (strain ATCC BAA-1226 / DSM 17306 / VKM B-2378 / K5).